Reading from the N-terminus, the 437-residue chain is Probable eukaryotic translation initiation factor 5-2 (437 aa).

A GTP-binding site is contributed by Gly-29–Thr-36. 2 stretches are compositionally biased toward basic and acidic residues: residues Glu-148–Lys-179 and Lys-191–Asn-212. 2 disordered regions span residues Glu-148–Asp-231 and Glu-262–Glu-284. Ser-201 carries the post-translational modification Phosphoserine; by CK2. Acidic residues predominate over residues Ala-213 to Val-226. Position 230 is a phosphothreonine; by CK2 (Thr-230). Positions Glu-278–Glu-436 constitute a W2 domain. Phosphoserine; by CK2 is present on residues Ser-428, Ser-431, and Ser-433.

It belongs to the eIF-2-beta/eIF-5 family. Phosphorylated at Ser-201, Thr-230, Ser-428, Ser-431, and Ser-433 by CK2.

Catalyzes the hydrolysis of GTP bound to the 40S ribosomal initiation complex (40S.mRNA.Met-tRNA[F].eIF-2.GTP) with the subsequent joining of a 60S ribosomal subunit resulting in the release of eIF-2 and the guanine nucleotide. The subsequent joining of a 60S ribosomal subunit results in the formation of a functional 80S initiation complex (80S.mRNA.Met-tRNA[F]). The polypeptide is Probable eukaryotic translation initiation factor 5-2 (Arabidopsis thaliana (Mouse-ear cress)).